The chain runs to 171 residues: Large ribosomal subunit protein uL10 (171 aa).

This sequence belongs to the universal ribosomal protein uL10 family. In terms of assembly, part of the ribosomal stalk of the 50S ribosomal subunit. The N-terminus interacts with L11 and the large rRNA to form the base of the stalk. The C-terminus forms an elongated spine to which L12 dimers bind in a sequential fashion forming a multimeric L10(L12)X complex.

In terms of biological role, forms part of the ribosomal stalk, playing a central role in the interaction of the ribosome with GTP-bound translation factors. This chain is Large ribosomal subunit protein uL10, found in Corynebacterium glutamicum (strain R).